A 74-amino-acid polypeptide reads, in one-letter code: Large ribosomal subunit protein bL31 (74 aa).

Zn(2+) contacts are provided by Cys-16, Cys-18, Cys-38, and Cys-41.

Belongs to the bacterial ribosomal protein bL31 family. Type A subfamily. In terms of assembly, part of the 50S ribosomal subunit. It depends on Zn(2+) as a cofactor.

Binds the 23S rRNA. In Streptomyces coelicolor (strain ATCC BAA-471 / A3(2) / M145), this protein is Large ribosomal subunit protein bL31 (rpmE).